The primary structure comprises 130 residues: Small ribosomal subunit protein uS9 (130 aa).

The tract at residues 109 to 130 is disordered; the sequence is RKKERKKYGQPGARAKFQYSKR.

It belongs to the universal ribosomal protein uS9 family.

This is Small ribosomal subunit protein uS9 from Maridesulfovibrio salexigens (strain ATCC 14822 / DSM 2638 / NCIMB 8403 / VKM B-1763) (Desulfovibrio salexigens).